The chain runs to 286 residues: Putative WUSCHEL-related homeobox 2 (286 aa).

Disordered stretches follow at residues 1 to 25 and 128 to 152; these read MAPA…VGST and SSSS…SPTT. The homeobox; WUS-type DNA-binding region spans 23–87; it reads GSTTRWCPTP…NHKARDRQKL (65 aa).

This sequence belongs to the WUS homeobox family.

Its subcellular location is the nucleus. In terms of biological role, transcription factor which may be involved in developmental processes. This chain is Putative WUSCHEL-related homeobox 2 (WOX2), found in Oryza sativa subsp. indica (Rice).